Reading from the N-terminus, the 179-residue chain is HTH-type transcriptional regulator AldR (179 aa).

Residues 32–93 form the HTH asnC-type domain; it reads LDEVDRRILS…DIDPVAVGLP (62 aa). The segment at residues 51-70 is a DNA-binding region (H-T-H motif); sequence NNALADTVGIAPSTCHGRVR.

In terms of assembly, homooctamer. Homotetramer. Tetramer of dimers. The N-terminal DNA-binding domains are swapped, forming a dimer, and four dimers are assembled into an octamer through crystal symmetry.

The DNA-binding activity of AldR is modulated by interaction of AldR with various amino acids. Alanine, tryptophan, tyrosine and aspartate completely abolish the DNA binding ability of AldR. On the other hand, glutamate and asparagine reduce AldR binding to DNA but do not completely abolish it. Binding of amino acids can lead to structural modifications and changes in oligomeric association. Activity is also inhibited by 3 small molecule inhibitors, tetrahydroquinoline carbonitrile derivative (S010-0261), levothyroxine and liothyronine, which can disrupt the AldR-DNA complex. Its function is as follows. Transcriptional regulator that might play a role under hypoxic conditions. Regulates the expression of ald, which encodes L-alanine dehydrogenase. Serves as both an activator for ald expression in the presence of L-alanine and a repressor in the absence of L-alanine. Acts by binding directly to the upstream region of the ald gene. Four AldR-binding sites (O2, O1, O4 and O3) were identified upstream of the ald gene. O2, O1 and O4 are required for the induction of ald expression by alanine, while O3 is directly involved in the repression of ald expression, by occluding the access of RNA polymerase to the ald promoter. In addition to O3, both O1 and O4 are also necessary for full repression of ald expression in the absence of alanine. The polypeptide is HTH-type transcriptional regulator AldR (Mycobacterium tuberculosis (strain ATCC 25618 / H37Rv)).